An 89-amino-acid chain; its full sequence is Small ribosomal subunit protein uS15 (89 aa).

This sequence belongs to the universal ribosomal protein uS15 family. As to quaternary structure, part of the 30S ribosomal subunit. Forms a bridge to the 50S subunit in the 70S ribosome, contacting the 23S rRNA.

In terms of biological role, one of the primary rRNA binding proteins, it binds directly to 16S rRNA where it helps nucleate assembly of the platform of the 30S subunit by binding and bridging several RNA helices of the 16S rRNA. Functionally, forms an intersubunit bridge (bridge B4) with the 23S rRNA of the 50S subunit in the ribosome. The chain is Small ribosomal subunit protein uS15 from Azorhizobium caulinodans (strain ATCC 43989 / DSM 5975 / JCM 20966 / LMG 6465 / NBRC 14845 / NCIMB 13405 / ORS 571).